Reading from the N-terminus, the 138-residue chain is Small ribosomal subunit protein uS11c (138 aa).

The tract at residues 1–23 is disordered; it reads MAKPIPRIGSRKNGRIGSRKSGR. Residues 9–23 show a composition bias toward basic residues; it reads GSRKNGRIGSRKSGR.

This sequence belongs to the universal ribosomal protein uS11 family. Part of the 30S ribosomal subunit.

It is found in the plastid. The protein resides in the chloroplast. The polypeptide is Small ribosomal subunit protein uS11c (Buxus microphylla (Littleleaf boxwood)).